The primary structure comprises 582 residues: Proline--tRNA ligase (582 aa).

Belongs to the class-II aminoacyl-tRNA synthetase family. ProS type 1 subfamily. Homodimer.

The protein resides in the cytoplasm. The catalysed reaction is tRNA(Pro) + L-proline + ATP = L-prolyl-tRNA(Pro) + AMP + diphosphate. In terms of biological role, catalyzes the attachment of proline to tRNA(Pro) in a two-step reaction: proline is first activated by ATP to form Pro-AMP and then transferred to the acceptor end of tRNA(Pro). As ProRS can inadvertently accommodate and process non-cognate amino acids such as alanine and cysteine, to avoid such errors it has two additional distinct editing activities against alanine. One activity is designated as 'pretransfer' editing and involves the tRNA(Pro)-independent hydrolysis of activated Ala-AMP. The other activity is designated 'posttransfer' editing and involves deacylation of mischarged Ala-tRNA(Pro). The misacylated Cys-tRNA(Pro) is not edited by ProRS. The chain is Proline--tRNA ligase from Mycobacterium avium (strain 104).